A 360-amino-acid polypeptide reads, in one-letter code: DNA replication and repair protein RecF (360 aa).

An ATP-binding site is contributed by 30-37 (GENGAGKT).

This sequence belongs to the RecF family.

The protein localises to the cytoplasm. In terms of biological role, the RecF protein is involved in DNA metabolism; it is required for DNA replication and normal SOS inducibility. RecF binds preferentially to single-stranded, linear DNA. It also seems to bind ATP. This Deinococcus deserti (strain DSM 17065 / CIP 109153 / LMG 22923 / VCD115) protein is DNA replication and repair protein RecF.